Reading from the N-terminus, the 332-residue chain is MMKKPVVIGLAVVVLAAVVAGGYWWYQSRQDNGLTLYGNVDIRTVNLSFRVGGRVESLAVDEGDAIKAGQVLGELDHKPYEIALMQAKAGVSVAQAQYDLMLAGYRDEEIAQAAAAVKQAQAAYDYEQNFYNRQQGLWKSRTISANDLENARSSRDQAQATLKSAQDKLRQYRSGNREQDIAQAKASLEQAQAQLAQAELNLQDSTLIAPSDGTLLTRAVEPGTVLNEGGTVFTVSLTRPVWVRAYVDERNLDQAQPGRKVLLYTDGRPDKPYHGQIGFVSPTAEFTPKTVETPDLRTDLVYRLRIVVTDADDALRQGMPVTVQFGDEAGHE.

The first 16 residues, 1–16 (MMKKPVVIGLAVVVLA), serve as a signal peptide directing secretion. The stretch at 141–210 (RTISANDLEN…NLQDSTLIAP (70 aa)) forms a coiled coil.

It belongs to the UPF0194 family.

It localises to the periplasm. The protein is UPF0194 membrane protein YbhG (ybhG) of Shigella flexneri.